Here is a 104-residue protein sequence, read N- to C-terminus: Large ribosomal subunit protein uL23 (104 aa).

The protein belongs to the universal ribosomal protein uL23 family. Part of the 50S ribosomal subunit. Contacts protein L29, and trigger factor when it is bound to the ribosome.

Functionally, one of the early assembly proteins it binds 23S rRNA. One of the proteins that surrounds the polypeptide exit tunnel on the outside of the ribosome. Forms the main docking site for trigger factor binding to the ribosome. In Nostoc sp. (strain PCC 7120 / SAG 25.82 / UTEX 2576), this protein is Large ribosomal subunit protein uL23.